A 643-amino-acid chain; its full sequence is MNANPKFISANAHVDEAAVAPLPNSRKVYVTGSQPDIRVPMREITQADTPTGFGGEKNPPIYVYDTSGPYTDPDAKIDIRAGLPALRQRWIEARGDTESLQGLSSEYGRERAADPATAELRFPGLHRTPRRAQPGKNVSQMHYAKQGIITPEMEYIAIRENQRRAEYLESLKASGPNGAKLAAMMGRQHPGQAFGATAFGPNGLQEITPEFVREEVARGRAIIPANINHPESEPMIIGRNFLVKINANIGNSAVTSSIGEEVDKMTWAIRWGGDTVMDLSTGKHIHETREWIIRNSPVPIGTVPIYQALEKVNGKAEDLTWEIFRDTLIEQAEQGVDYFTIHAGVRLQYVPLTANRMTGIVSRGGSIMAKWCLAHHKESFLYEHFEDICEIMKAYDVSFSLGDGLRPGSIYDANDEAQLGELKTLGELTQIAWKHDVQVMIEGPGHVPMQLIKENMDLQLEWCDEAPFYTLGPLTTDIAPGYDHITSGIGAAMIGWFGTAMLCYVTPKEHLGLPNKDDVKTGIITYKLAAHAADLAKGHPGAQVRDNALSKARFEFRWEDQFNLGLDPDKAREFHDETLPKDSAKVAHFCSMCGPHFCSMKITQDVRDYAAKEGMSDADALKKGMEVKAVEFIKSGAEIYQRQ.

Residues Asn248, Met277, Tyr306, His342, 362–364 (SRG), 403–406 (DGLR), and Glu442 each bind substrate. His446 lines the Zn(2+) pocket. Tyr469 contacts substrate. His510 contacts Zn(2+). [4Fe-4S] cluster is bound by residues Cys590, Cys593, and Cys598.

This sequence belongs to the ThiC family. In terms of assembly, homodimer. [4Fe-4S] cluster is required as a cofactor.

The enzyme catalyses 5-amino-1-(5-phospho-beta-D-ribosyl)imidazole + S-adenosyl-L-methionine = 4-amino-2-methyl-5-(phosphooxymethyl)pyrimidine + CO + 5'-deoxyadenosine + formate + L-methionine + 3 H(+). It functions in the pathway cofactor biosynthesis; thiamine diphosphate biosynthesis. Its function is as follows. Catalyzes the synthesis of the hydroxymethylpyrimidine phosphate (HMP-P) moiety of thiamine from aminoimidazole ribotide (AIR) in a radical S-adenosyl-L-methionine (SAM)-dependent reaction. The protein is Phosphomethylpyrimidine synthase of Paraburkholderia phymatum (strain DSM 17167 / CIP 108236 / LMG 21445 / STM815) (Burkholderia phymatum).